Consider the following 435-residue polypeptide: Tol-Pal system protein TolB (435 aa).

Residues 1–28 (MTKCSFFRAILVAVGLMTAAVFATPANA) form the signal peptide. Residues 288 to 310 (STAAIDTSPSYSPDGARVSFESD) are disordered.

It belongs to the TolB family. As to quaternary structure, the Tol-Pal system is composed of five core proteins: the inner membrane proteins TolA, TolQ and TolR, the periplasmic protein TolB and the outer membrane protein Pal. They form a network linking the inner and outer membranes and the peptidoglycan layer.

The protein localises to the periplasm. Part of the Tol-Pal system, which plays a role in outer membrane invagination during cell division and is important for maintaining outer membrane integrity. This is Tol-Pal system protein TolB from Rhizobium johnstonii (strain DSM 114642 / LMG 32736 / 3841) (Rhizobium leguminosarum bv. viciae).